Consider the following 766-residue polypeptide: Deoxynucleotidyltransferase terminal-interacting protein 2 (766 aa).

The disordered stretch occupies residues 1–99 (MVVTRSARPQ…DCSSVPEVQD (99 aa)). Composition is skewed to polar residues over residues 13–28 (NEATSVESLRQKNSAV) and 42–56 (SPDNPNTTESQTTPE). T127 is modified (phosphothreonine). Phosphoserine occurs at positions 139, 143, and 146. A disordered region spans residues 155 to 175 (TEITTRRSKAKSQREPKQESH). Positions 166-175 (SQREPKQESH) are enriched in basic and acidic residues. Residues S180 and S190 each carry the phosphoserine modification. A Glycyl lysine isopeptide (Lys-Gly) (interchain with G-Cter in SUMO2) cross-link involves residue K217. T229 is modified (phosphothreonine). Phosphoserine is present on residues S236, S248, and S250. K254 participates in a covalent cross-link: Glycyl lysine isopeptide (Lys-Gly) (interchain with G-Cter in SUMO2). At S258 the chain carries Phosphoserine. K327 is covalently cross-linked (Glycyl lysine isopeptide (Lys-Gly) (interchain with G-Cter in SUMO2)). At S334 the chain carries Phosphoserine. 3 disordered regions span residues 345 to 367 (VSQRHSTPESDKTTSESSTLNHE), 390 to 450 (KNAI…KDDS), and 520 to 557 (KAGEVATEEEEEEEEEESEEELSDHDRNKDNEFSDEDN). K394 is covalently cross-linked (Glycyl lysine isopeptide (Lys-Gly) (interchain with G-Cter in SUMO2)). Over residues 421–434 (DMSKEKEVDSESDT) the composition is skewed to basic and acidic residues. Residues 435 to 444 (KPSNLEFNTT) show a composition bias toward polar residues. Positions 515–552 (LDEEDKAGEVATEEEEEEEEEESEEELSDHDRNKDNEF) form a coiled coil. Residues 520 to 542 (KAGEVATEEEEEEEEEESEEELS) show a composition bias toward acidic residues. The tdBR region; mediates interaction with DNTT stretch occupies residues 558–615 (LLSNTKSKLLKLMSSSIDTGLNIKELGGLYINFNADKVQLNKRTLTQMKEKRKDELLQ). Glycyl lysine isopeptide (Lys-Gly) (interchain with G-Cter in SUMO2) cross-links involve residues K568, K594, and K616. Phosphothreonine is present on T620. Glycyl lysine isopeptide (Lys-Gly) (interchain with G-Cter in SUMO2) cross-links involve residues K636, K659, K668, K696, and K741.

Forms a ternary complex with DNTT and core histone; interaction with PCNA releases DNTT and H2A/H2B histones from this ternary complex. Interacts with ESR1, ESR2, PPARG and RXRA. Part of the small subunit (SSU) processome, composed of more than 70 proteins and the RNA chaperone small nucleolar RNA (snoRNA) U3.

The protein localises to the nucleus. It is found in the nucleolus. Its function is as follows. Regulates the transcriptional activity of DNTT and ESR1. May function as a chromatin remodeling protein. Part of the small subunit (SSU) processome, first precursor of the small eukaryotic ribosomal subunit. During the assembly of the SSU processome in the nucleolus, many ribosome biogenesis factors, an RNA chaperone and ribosomal proteins associate with the nascent pre-rRNA and work in concert to generate RNA folding, modifications, rearrangements and cleavage as well as targeted degradation of pre-ribosomal RNA by the RNA exosome. The sequence is that of Deoxynucleotidyltransferase terminal-interacting protein 2 (DNTTIP2) from Bos taurus (Bovine).